Reading from the N-terminus, the 359-residue chain is 3-isopropylmalate dehydrogenase (359 aa).

74–85 (GPKWGTGSVRPE) contributes to the NAD(+) binding site. Substrate contacts are provided by arginine 92, arginine 102, arginine 131, and aspartate 220. Mg(2+) is bound by residues aspartate 220, aspartate 245, and aspartate 249. 284-295 (GSAPDLPANKVN) provides a ligand contact to NAD(+).

The protein belongs to the isocitrate and isopropylmalate dehydrogenases family. As to quaternary structure, homodimer. It depends on Mg(2+) as a cofactor. Mn(2+) is required as a cofactor.

It localises to the cytoplasm. The enzyme catalyses (2R,3S)-3-isopropylmalate + NAD(+) = 4-methyl-2-oxopentanoate + CO2 + NADH. It functions in the pathway amino-acid biosynthesis; L-leucine biosynthesis; L-leucine from 3-methyl-2-oxobutanoate: step 3/4. Functionally, catalyzes the oxidation of 3-carboxy-2-hydroxy-4-methylpentanoate (3-isopropylmalate) to 3-carboxy-4-methyl-2-oxopentanoate. The product decarboxylates to 4-methyl-2 oxopentanoate. This Kluyveromyces marxianus (Yeast) protein is 3-isopropylmalate dehydrogenase (LEU2).